A 227-amino-acid polypeptide reads, in one-letter code: ATP-dependent dethiobiotin synthetase BioD (227 aa).

13–18 serves as a coordination point for ATP; sequence DVGKTV. Threonine 17 provides a ligand contact to Mg(2+). Lysine 38 is a catalytic residue. ATP-binding positions include aspartate 55, 116–119, 176–177, and 205–207; these read EGAG, NR, and PYI. 2 residues coordinate Mg(2+): aspartate 55 and glutamate 116.

This sequence belongs to the dethiobiotin synthetase family. In terms of assembly, homodimer. Mg(2+) serves as cofactor.

The protein resides in the cytoplasm. It catalyses the reaction (7R,8S)-7,8-diammoniononanoate + CO2 + ATP = (4R,5S)-dethiobiotin + ADP + phosphate + 3 H(+). Its pathway is cofactor biosynthesis; biotin biosynthesis; biotin from 7,8-diaminononanoate: step 1/2. Functionally, catalyzes a mechanistically unusual reaction, the ATP-dependent insertion of CO2 between the N7 and N8 nitrogen atoms of 7,8-diaminopelargonic acid (DAPA, also called 7,8-diammoniononanoate) to form a ureido ring. The protein is ATP-dependent dethiobiotin synthetase BioD of Vibrio campbellii (strain ATCC BAA-1116).